The chain runs to 79 residues: Conotoxin VnMKLT1-01121 (79 aa).

An N-terminal signal peptide occupies residues 1–22 (MKLTCMMIVAVLFLTAWTFVTA). Residues 23–48 (DDSRNGLEYLFPKAHYEMNPEASKLN) constitute a propeptide that is removed on maturation. Intrachain disulfides connect Cys-53-Cys-70, Cys-60-Cys-74, and Cys-69-Cys-78.

The protein belongs to the conotoxin O1 superfamily. As to expression, expressed by the venom duct.

It localises to the secreted. In Conus ventricosus (Mediterranean cone), this protein is Conotoxin VnMKLT1-01121.